Consider the following 290-residue polypeptide: Arylamine N-acetyltransferase 1 (290 aa).

Position 1 is an N-acetylmethionine (Met1). Catalysis depends on Cys68, which acts as the Acyl-thioester intermediate. CoA contacts are provided by Thr103 and Gly104. 106 to 107 contributes to the substrate binding site; it reads IH. Residues His107 and Asp122 contribute to the active site. CoA is bound by residues Tyr208 and Ser214.

The protein belongs to the arylamine N-acetyltransferase family.

The protein resides in the cytoplasm. The enzyme catalyses an arylamine + acetyl-CoA = an N-acetylarylamine + CoA. In Oryctolagus cuniculus (Rabbit), this protein is Arylamine N-acetyltransferase 1 (NAT1).